A 463-amino-acid polypeptide reads, in one-letter code: Dipeptidyl peptidase 1 (463 aa).

A signal peptide spans 1–24 (MGPWSGSRLVALLLLVYGAGSVRG). Asn-29 and Asn-53 each carry an N-linked (GlcNAc...) asparagine glycan. 2 disulfide bridges follow: Cys-30–Cys-118 and Cys-54–Cys-136. Positions 135–230 (ACFTGRKTGN…TAEIQKKILH (96 aa)) are excised as a propeptide. Asn-144 carries an N-linked (GlcNAc...) asparagine glycan. 3 disulfide bridges follow: Cys-255-Cys-298, Cys-291-Cys-331, and Cys-321-Cys-337. Cys-258 is a catalytic residue. Residue Asn-276 is glycosylated (N-linked (GlcNAc...) asparagine). Chloride contacts are provided by Phe-302 and Tyr-304. A chloride-binding site is contributed by Tyr-347. Catalysis depends on residues His-405 and Asn-427.

Belongs to the peptidase C1 family. In terms of assembly, tetramer of heterotrimers consisting of exclusion domain, heavy- and light chains. It depends on chloride as a cofactor.

The protein resides in the lysosome. The catalysed reaction is Release of an N-terminal dipeptide, Xaa-Yaa-|-Zaa-, except when Xaa is Arg or Lys, or Yaa or Zaa is Pro.. Its function is as follows. Thiol protease. Has dipeptidylpeptidase activity. Active against a broad range of dipeptide substrates composed of both polar and hydrophobic amino acids. Proline cannot occupy the P1 position and arginine cannot occupy the P2 position of the substrate. Can act as both an exopeptidase and endopeptidase. Activates serine proteases such as elastase, cathepsin G and granzymes A and B. The protein is Dipeptidyl peptidase 1 (CTSC) of Bos taurus (Bovine).